We begin with the raw amino-acid sequence, 921 residues long: Levanase (921 aa).

A signal peptide spans 1–23 (MMKWFAKLILSLSLAVVMAASSA). Substrate-binding positions include 409–412 (SASD), glutamine 428, 460–461 (WS), 539–540 (RD), glutamate 591, and tryptophan 679. Aspartate 412 is a catalytic residue.

It belongs to the glycosyl hydrolase 32 family.

The protein localises to the secreted. The enzyme catalyses Random hydrolysis of (2-&gt;6)-beta-D-fructofuranosidic linkages in (2-&gt;6)-beta-D-fructans (levans) containing more than 3 fructose units.. With respect to regulation, is completely inhibited by low concentrations of heavy metal ions, while Ca(2+) and Mg(2+) or chelating agents such as EDTA neither inhibit nor activate the enzyme to any significant extent. In terms of biological role, catalyzes the hydrolysis of levan with endo-type specificity. The products of levan hydrolysis are a mixture of fructose and a series of fructooligosaccharides up to 12-mer, with levantriose being the major oligosaccharide obtained. Is not active towards sucrose. The sequence is that of Levanase from Bacillus sp. (strain L7).